The primary structure comprises 326 residues: Endo-beta-1,4-glucanase A (326 aa).

The N-terminal stretch at 1–19 is a signal peptide; the sequence is MRSLVLLSSVLALVAPSKG. Catalysis depends on Glu-150, which acts as the Proton donor. The active-site Nucleophile is the Glu-257.

Belongs to the glycosyl hydrolase 5 (cellulase A) family.

The protein localises to the secreted. It carries out the reaction Endohydrolysis of (1-&gt;4)-beta-D-glucosidic linkages in cellulose, lichenin and cereal beta-D-glucans.. In terms of biological role, has endoglucanase activity on substrates containing beta-1,4 glycosidic bonds, like in carboxymethylcellulose (CMC), hydroxyethylcellulose (HEC) and beta-glucan. Involved in the degradation of complex natural cellulosic substrates. The protein is Endo-beta-1,4-glucanase A (eglA) of Emericella nidulans (strain FGSC A4 / ATCC 38163 / CBS 112.46 / NRRL 194 / M139) (Aspergillus nidulans).